We begin with the raw amino-acid sequence, 202 residues long: MKALTARQQQVYDLIRDHINQTGMPPTRAEIAAQLGFRSPNAAEEHLKALARKGVIEIVSGASRGIRLMMEDESGLPLIGRVAAGEPLLAEQHIEGHYQVDPGLFKPGADFLLRVSGMSMKNIGIMDGDLLAVHKTEDVRNGQVVVARIDDEVTVKRLKKNGNMVELLPENPDFQPIVVDLRQQTLTIEGLAVGVIRNGNWL.

Residues 28-48 constitute a DNA-binding region (H-T-H motif); sequence RAEIAAQLGFRSPNAAEEHLK. Catalysis depends on for autocatalytic cleavage activity residues serine 119 and lysine 156.

This sequence belongs to the peptidase S24 family. Homodimer.

The enzyme catalyses Hydrolysis of Ala-|-Gly bond in repressor LexA.. Functionally, represses a number of genes involved in the response to DNA damage (SOS response), including recA and lexA. Binds to the 16 bp palindromic sequence 5'-CTGTATATATATACAG-3'. In the presence of single-stranded DNA, RecA interacts with LexA causing an autocatalytic cleavage which disrupts the DNA-binding part of LexA, leading to derepression of the SOS regulon and eventually DNA repair. The sequence is that of LexA repressor from Erwinia tasmaniensis (strain DSM 17950 / CFBP 7177 / CIP 109463 / NCPPB 4357 / Et1/99).